A 470-amino-acid chain; its full sequence is Regulator of microtubule dynamics protein 3 (470 aa).

The Mitochondrial intermembrane segment spans residues 1-12; that stretch reads MSRLGALGGSRA. A helical transmembrane segment spans residues 13–35; the sequence is GLGLLLGTAAGLGFLCVLYSQRW. The Cytoplasmic portion of the chain corresponds to 36-470; sequence KRTQRHGRSH…DLEELEVILG (435 aa). Phosphoserine is present on residues Ser-44, Ser-46, Ser-50, and Ser-57. Residues 91 to 125 adopt a coiled-coil conformation; it reads LDRLDFVLTSLMALRREVEELQRSLQGLAGEIVGE. The FFAT signature appears at 157–163; the sequence is VYFTASS. Position 160 is a phosphothreonine (Thr-160). Residues 168-205 form a disordered region; that stretch reads TDAESEGGYTTANAESDYERDSDKESGDAEDEVSCETV. 4 positions are modified to phosphoserine: Ser-183, Ser-193, Ser-212, and Ser-233. Basic and acidic residues predominate over residues 184–194; that stretch reads DYERDSDKESG.

The protein belongs to the RMDN family. In terms of assembly, interacts with PTPN2. Interacts with microtubules. Interacts with VAPB. Interacts (via FFAT motif) with MOSPD2 (via MSP domain). Interacts (via phosphorylated FFAT motif) with MOSPD2, VAPA and VAPB. Phosphorylation at Thr-160 of the FFAT motif activates interaction with MOSPD2, VAPA and VAPB.

It localises to the mitochondrion outer membrane. It is found in the cytoplasm. The protein resides in the nucleus. Its subcellular location is the cytoskeleton. The protein localises to the spindle. It localises to the spindle pole. In terms of biological role, involved in cellular calcium homeostasis regulation. May participate in differentiation and apoptosis of keratinocytes. Overexpression induces apoptosis. This is Regulator of microtubule dynamics protein 3 from Mus musculus (Mouse).